Here is a 208-residue protein sequence, read N- to C-terminus: Urease accessory protein UreG (208 aa).

Residue 10–17 (GPVGSGKT) coordinates GTP.

This sequence belongs to the SIMIBI class G3E GTPase family. UreG subfamily. As to quaternary structure, homodimer. UreD, UreF and UreG form a complex that acts as a GTP-hydrolysis-dependent molecular chaperone, activating the urease apoprotein by helping to assemble the nickel containing metallocenter of UreC. The UreE protein probably delivers the nickel.

Its subcellular location is the cytoplasm. Facilitates the functional incorporation of the urease nickel metallocenter. This process requires GTP hydrolysis, probably effectuated by UreG. This Halalkalibacterium halodurans (strain ATCC BAA-125 / DSM 18197 / FERM 7344 / JCM 9153 / C-125) (Bacillus halodurans) protein is Urease accessory protein UreG.